The chain runs to 532 residues: Probable pectinesterase/pectinesterase inhibitor 39 (532 aa).

An N-terminal signal peptide occupies residues 1 to 34; that stretch reads MINNHPIREKPKHIIFNLLSLIFFLIFLSTVVSS. A pectinesterase inhibitor 39 region spans residues 35-169; sequence QSPSYTTHKT…ENLKEIILDI (135 aa). N-linked (GlcNAc...) asparagine glycosylation is found at Asn-62, Asn-74, Asn-85, Asn-172, Asn-221, Asn-231, Asn-244, and Asn-287. The tract at residues 221-518 is pectinesterase 39; the sequence is NLSVAIDGTG…FTVGPFIDGS (298 aa). The substrate site is built by Thr-296 and Gln-326. Asp-349 functions as the Proton donor; for pectinesterase activity in the catalytic mechanism. Residue Asp-370 is the Nucleophile; for pectinesterase activity of the active site. 2 N-linked (GlcNAc...) asparagine glycosylation sites follow: Asn-382 and Asn-404. 2 residues coordinate substrate: Arg-438 and Trp-440. 2 N-linked (GlcNAc...) asparagine glycosylation sites follow: Asn-502 and Asn-522.

In the N-terminal section; belongs to the PMEI family. This sequence in the C-terminal section; belongs to the pectinesterase family. Expressed in siliques but not in flower buds.

The protein localises to the secreted. Its subcellular location is the cell wall. It carries out the reaction [(1-&gt;4)-alpha-D-galacturonosyl methyl ester](n) + n H2O = [(1-&gt;4)-alpha-D-galacturonosyl](n) + n methanol + n H(+). It participates in glycan metabolism; pectin degradation; 2-dehydro-3-deoxy-D-gluconate from pectin: step 1/5. Acts in the modification of cell walls via demethylesterification of cell wall pectin. This is Probable pectinesterase/pectinesterase inhibitor 39 (PME39) from Arabidopsis thaliana (Mouse-ear cress).